We begin with the raw amino-acid sequence, 279 residues long: Prostatic spermine-binding protein (279 aa).

Residues 1 to 17 form the signal peptide; the sequence is MLLLVTLALLAGPTCRA. Glutamine 18 is subject to Pyrrolidone carboxylic acid. A Jacalin-type lectin domain is found at 18 to 151; that stretch reads QNILGNNVGT…LNGMGFKWKN (134 aa). Asparagine 62 carries an N-linked (GlcNAc...) asparagine glycan. Acidic residues-rich tracts occupy residues 160–177 and 185–279; these read DDDKEDDDDEHDDDNEED and NDHD…EEEE. The disordered stretch occupies residues 160–279; the sequence is DDDKEDDDDE…DDDNGDEEEE (120 aa).

To mouse SBP. In terms of tissue distribution, prostate.

Spermine-binding protein is an androgen regulated ventral prostate glycoprotein that binds various polyamines. In Rattus norvegicus (Rat), this protein is Prostatic spermine-binding protein (Sbp).